The following is a 510-amino-acid chain: Bone morphogenetic protein 6 (510 aa).

An N-terminal signal peptide occupies residues 1–20; sequence MPGLGRRAQWLCWWWGLLCS. Positions 21–371 are excised as a propeptide; the sequence is CGPPPLRPPL…VSEVHVRTTR (351 aa). Disordered stretches follow at residues 87–129 and 143–199; these read PHRP…RLKS and NDDE…PLTS. Positions 106-116 are enriched in low complexity; sequence PQQQQQQQQQQ. N-linked (GlcNAc...) asparagine glycans are attached at residues N238, N266, N383, N401, and N451. The disordered stretch occupies residues 370-402; that stretch reads TRSASSRRRQQSRNRSTQSQDVSRGSGSSDYNG. The segment covering 390 to 401 has biased composition (polar residues); that stretch reads DVSRGSGSSDYN. Intrachain disulfides connect C409/C475, C438/C507, and C442/C509.

This sequence belongs to the TGF-beta family. As to quaternary structure, interacts with SOSTDC1. Interacts (when glycosylated) with type I receptor ACVR1; the interaction may induce HAMP expression. Interacts with type II receptor ACVR2B. Interacts with Hemojuvelin/HJV. Interacts with ERFE; the interaction inhibits BMP-induced transcription of HAMP. Interacts with BMPR1A/ALK3. Forms heterodimers with BMP2 in vitro; the heterodimer then binds to its receptor BMPR1A /ALK3 and may induce HAMP expression. As to expression, expressed in the lung. Low levels seen in the kidney.

Its subcellular location is the secreted. In terms of biological role, growth factor of the TGF-beta superfamily that plays essential roles in many developmental processes including cartilage and bone formation. Also plays an important role in the regulation of HAMP/hepcidin expression and iron metabolism by acting as a ligand for hemojuvelin/HJV. Also acts to promote expression of HAMP, potentially via the interaction with its receptor BMPR1A/ALK3. Initiates the canonical BMP signaling cascade by associating with type I receptor ACVR1 and type II receptor ACVR2B. In turn, ACVR1 propagates signal by phosphorylating SMAD1/5/8 that travel to the nucleus and act as activators and repressors of transcription of target. Can also signal through non-canonical pathway such as TAZ-Hippo signaling cascade to modulate VEGF signaling by regulating VEGFR2 expression. The sequence is that of Bone morphogenetic protein 6 (Bmp6) from Mus musculus (Mouse).